The primary structure comprises 122 residues: LOB domain-containing protein 5 (122 aa).

The LOB domain maps to 8 to 109 (RPCSVCITKN…AYLRELQEKI (102 aa)).

The protein belongs to the LOB domain-containing protein family.

The protein is LOB domain-containing protein 5 (LBD5) of Arabidopsis thaliana (Mouse-ear cress).